The primary structure comprises 136 residues: Nucleoside diphosphate kinase (136 aa).

The ATP site is built by K10, F58, R86, T92, R104, and N114. H117 acts as the Pros-phosphohistidine intermediate in catalysis.

The protein belongs to the NDK family. Homotetramer. Mg(2+) is required as a cofactor.

The protein localises to the cytoplasm. The catalysed reaction is a 2'-deoxyribonucleoside 5'-diphosphate + ATP = a 2'-deoxyribonucleoside 5'-triphosphate + ADP. The enzyme catalyses a ribonucleoside 5'-diphosphate + ATP = a ribonucleoside 5'-triphosphate + ADP. Major role in the synthesis of nucleoside triphosphates other than ATP. The ATP gamma phosphate is transferred to the NDP beta phosphate via a ping-pong mechanism, using a phosphorylated active-site intermediate. In Corynebacterium diphtheriae (strain ATCC 700971 / NCTC 13129 / Biotype gravis), this protein is Nucleoside diphosphate kinase.